The following is a 215-amino-acid chain: Putative glycosyltransferase ALG1L2 (215 aa).

Residues 40 to 66 form a disordered region; it reads PFRARSEPEDPDTERSAFTERDSGSGL. Positions 43-62 are enriched in basic and acidic residues; it reads ARSEPEDPDTERSAFTERDS.

It belongs to the glycosyltransferase group 1 family.

In terms of biological role, putative glycosyltransferase. This Homo sapiens (Human) protein is Putative glycosyltransferase ALG1L2 (ALG1L2).